A 175-amino-acid polypeptide reads, in one-letter code: NADH-ubiquinone oxidoreductase chain 6 (175 aa).

Transmembrane regions (helical) follow at residues 1 to 21 (MMIY…VGFS), 25 to 45 (SPIY…GIVM), 47 to 67 (FGGS…MLVV), 88 to 108 (TVLS…LYMF), and 149 to 169 (YGVW…LVVL).

It belongs to the complex I subunit 6 family. Core subunit of respiratory chain NADH dehydrogenase (Complex I) which is composed of 45 different subunits.

Its subcellular location is the mitochondrion inner membrane. It catalyses the reaction a ubiquinone + NADH + 5 H(+)(in) = a ubiquinol + NAD(+) + 4 H(+)(out). Functionally, core subunit of the mitochondrial membrane respiratory chain NADH dehydrogenase (Complex I) which catalyzes electron transfer from NADH through the respiratory chain, using ubiquinone as an electron acceptor. Essential for the catalytic activity and assembly of complex I. This Rhinoceros unicornis (Greater Indian rhinoceros) protein is NADH-ubiquinone oxidoreductase chain 6 (MT-ND6).